A 217-amino-acid chain; its full sequence is Protein-L-isoaspartate O-methyltransferase 2 (217 aa).

The active site involves serine 62.

This sequence belongs to the methyltransferase superfamily. L-isoaspartyl/D-aspartyl protein methyltransferase family.

Its subcellular location is the cytoplasm. The catalysed reaction is [protein]-L-isoaspartate + S-adenosyl-L-methionine = [protein]-L-isoaspartate alpha-methyl ester + S-adenosyl-L-homocysteine. Catalyzes the methyl esterification of L-isoaspartyl residues in peptides and proteins that result from spontaneous decomposition of normal L-aspartyl and L-asparaginyl residues. It plays a role in the repair and/or degradation of damaged proteins. This is Protein-L-isoaspartate O-methyltransferase 2 from Geotalea uraniireducens (strain Rf4) (Geobacter uraniireducens).